Here is a 278-residue protein sequence, read N- to C-terminus: Inosose isomerase (278 aa).

A divalent metal cation is bound by residues E142, D174, H200, and E246.

The protein belongs to the IolI family. It depends on a divalent metal cation as a cofactor.

It carries out the reaction scyllo-inosose = scyllo-inosine. It functions in the pathway polyol metabolism; myo-inositol degradation into acetyl-CoA. Involved in the reversible interconverion of 2-keto-myo-inositol (2KMI, inosose or 2,4,6/3,5-pentahydroxycyclohexanone) to 1-keto-D-chiro-inositol (1KDCI or 2,3,5/4,6-pentahydroxycyclohexanone). The chain is Inosose isomerase (iolI) from Bacillus licheniformis (strain ATCC 14580 / DSM 13 / JCM 2505 / CCUG 7422 / NBRC 12200 / NCIMB 9375 / NCTC 10341 / NRRL NRS-1264 / Gibson 46).